A 387-amino-acid chain; its full sequence is S-adenosylmethionine synthase (387 aa).

His-17 is an ATP binding site. Position 19 (Asp-19) interacts with Mg(2+). Position 45 (Glu-45) interacts with K(+). Residues Glu-58 and Gln-101 each coordinate L-methionine. The segment at Gln-101–Arg-111 is flexible loop. Residues Asp-168–Lys-170, Arg-234–Phe-235, Asp-243, Arg-249–Lys-250, Ala-266, and Lys-270 contribute to the ATP site. Residue Asp-243 participates in L-methionine binding. An L-methionine-binding site is contributed by Lys-274.

The protein belongs to the AdoMet synthase family. In terms of assembly, homotetramer; dimer of dimers. Mg(2+) is required as a cofactor. K(+) serves as cofactor.

It localises to the cytoplasm. It catalyses the reaction L-methionine + ATP + H2O = S-adenosyl-L-methionine + phosphate + diphosphate. It participates in amino-acid biosynthesis; S-adenosyl-L-methionine biosynthesis; S-adenosyl-L-methionine from L-methionine: step 1/1. Functionally, catalyzes the formation of S-adenosylmethionine (AdoMet) from methionine and ATP. The overall synthetic reaction is composed of two sequential steps, AdoMet formation and the subsequent tripolyphosphate hydrolysis which occurs prior to release of AdoMet from the enzyme. The polypeptide is S-adenosylmethionine synthase (Bordetella bronchiseptica (strain ATCC BAA-588 / NCTC 13252 / RB50) (Alcaligenes bronchisepticus)).